The sequence spans 344 residues: Arginine N-succinyltransferase (344 aa).

Leu125 contacts succinyl-CoA. His229 acts as the Proton donor in catalysis.

It belongs to the arginine N-succinyltransferase family.

The enzyme catalyses succinyl-CoA + L-arginine = N(2)-succinyl-L-arginine + CoA + H(+). It participates in amino-acid degradation; L-arginine degradation via AST pathway; L-glutamate and succinate from L-arginine: step 1/5. In terms of biological role, catalyzes the transfer of succinyl-CoA to arginine to produce N(2)-succinylarginine. The polypeptide is Arginine N-succinyltransferase (Escherichia coli O6:K15:H31 (strain 536 / UPEC)).